A 759-amino-acid chain; its full sequence is Fidgetin (759 aa).

Disordered regions lie at residues 89–111 (SNYS…PWQP), 200–237 (SQAT…PGYN), 258–293 (VGSG…VPGY), and 337–429 (SYGQ…VMSE). Pro residues-rich tracts occupy residues 221–232 (QPPPPPPPPPAL) and 266–289 (GAPP…PPTT). 2 stretches are compositionally biased toward polar residues: residues 337–347 (SYGQQRSTQSP) and 382–418 (LMPS…SSES). Phosphothreonine is present on Thr400. ATP-binding positions include Ala489 and 529-534 (GTGKTL).

Belongs to the AAA ATPase family. Interacts with AKAP8 (via C-terminus). Widely expressed.

The protein localises to the nucleus matrix. Its subcellular location is the cytoplasm. The protein resides in the cytoskeleton. It is found in the microtubule organizing center. It localises to the centrosome. In terms of biological role, ATP-dependent microtubule severing protein. Severs microtubules along their length and depolymerizes their ends, primarily the minus-end, suppressing microtubule growth from and attachment to centrosomes. Microtubule severing may promote rapid reorganization of cellular microtubule arrays and the release of microtubules from the centrosome following nucleation. Microtubule release from the mitotic spindle poles may allow depolymerization of the microtubule end proximal to the spindle pole, leading to poleward microtubule flux and poleward motion of chromosome. This is Fidgetin (Fign) from Mus musculus (Mouse).